A 101-amino-acid polypeptide reads, in one-letter code: Small ribosomal subunit protein uS14 (101 aa).

The protein belongs to the universal ribosomal protein uS14 family. Part of the 30S ribosomal subunit. Contacts proteins S3 and S10.

In terms of biological role, binds 16S rRNA, required for the assembly of 30S particles and may also be responsible for determining the conformation of the 16S rRNA at the A site. The protein is Small ribosomal subunit protein uS14 of Francisella philomiragia subsp. philomiragia (strain ATCC 25017 / CCUG 19701 / FSC 153 / O#319-036).